Reading from the N-terminus, the 462-residue chain is Probable Xaa-Pro aminopeptidase NECHADRAFT_60613 (462 aa).

Residues Asp259, Asp270, Glu393, and Glu433 each contribute to the Mn(2+) site.

It belongs to the peptidase M24B family. Mn(2+) serves as cofactor.

It catalyses the reaction Release of any N-terminal amino acid, including proline, that is linked to proline, even from a dipeptide or tripeptide.. Catalyzes the removal of a penultimate prolyl residue from the N-termini of peptides. This Fusarium vanettenii (strain ATCC MYA-4622 / CBS 123669 / FGSC 9596 / NRRL 45880 / 77-13-4) (Fusarium solani subsp. pisi) protein is Probable Xaa-Pro aminopeptidase NECHADRAFT_60613.